A 787-amino-acid polypeptide reads, in one-letter code: LPS-assembly protein LptD (787 aa).

Positions 1 to 39 (MPPKTLFPLVPACDAAPRKKRLAVALLAVPGLVPAVSQA) are cleaved as a signal peptide.

The protein belongs to the LptD family. Component of the lipopolysaccharide transport and assembly complex. Interacts with LptE and LptA.

The protein resides in the cell outer membrane. In terms of biological role, together with LptE, is involved in the assembly of lipopolysaccharide (LPS) at the surface of the outer membrane. This chain is LPS-assembly protein LptD, found in Burkholderia pseudomallei (strain 1710b).